An 83-amino-acid polypeptide reads, in one-letter code: Small ribosomal subunit protein eS21 (83 aa).

The protein belongs to the eukaryotic ribosomal protein eS21 family. In terms of assembly, component of the 40S small ribosomal subunit.

It is found in the cytoplasm. It localises to the cytosol. The protein localises to the rough endoplasmic reticulum. Its function is as follows. Component of the small ribosomal subunit. The ribosome is a large ribonucleoprotein complex responsible for the synthesis of proteins in the cell. The protein is Small ribosomal subunit protein eS21 (rps21) of Xenopus laevis (African clawed frog).